Reading from the N-terminus, the 125-residue chain is Glycine cleavage system H protein (125 aa).

Positions 22 to 103 (VFVVGITENA…AFTAWIFKIK (82 aa)) constitute a Lipoyl-binding domain. Position 63 is an N6-lipoyllysine (lysine 63).

The protein belongs to the GcvH family. The glycine cleavage system is composed of four proteins: P, T, L and H. (R)-lipoate is required as a cofactor.

The glycine cleavage system catalyzes the degradation of glycine. The H protein shuttles the methylamine group of glycine from the P protein to the T protein. The polypeptide is Glycine cleavage system H protein (Bordetella avium (strain 197N)).